The chain runs to 232 residues: Ribonuclease 3 (232 aa).

In terms of domain architecture, RNase III spans 6-137; sequence QEMLKRDFNI…FIGALYLDQG (132 aa). Position 50 (Glu50) interacts with Mg(2+). The active site involves Asp54. Mg(2+)-binding residues include Asp123 and Glu126. Glu126 is a catalytic residue. The DRBM domain maps to 163-232; that stretch reads DNKTELQEVL…AYQALKKLRK (70 aa).

The protein belongs to the ribonuclease III family. Homodimer. Mg(2+) is required as a cofactor.

It is found in the cytoplasm. It carries out the reaction Endonucleolytic cleavage to 5'-phosphomonoester.. Functionally, digests double-stranded RNA. Involved in the processing of primary rRNA transcript to yield the immediate precursors to the large and small rRNAs (23S and 16S). Processes some mRNAs, and tRNAs when they are encoded in the rRNA operon. Processes pre-crRNA and tracrRNA of type II CRISPR loci if present in the organism. The sequence is that of Ribonuclease 3 from Ligilactobacillus salivarius (strain UCC118) (Lactobacillus salivarius).